The following is a 404-amino-acid chain: Serine/threonine transporter SstT (404 aa).

8 helical membrane-spanning segments follow: residues 10-30, 53-73, 81-101, 140-160, 177-197, 215-235, 287-307, and 329-349; these read ILGGNLVLRIAVGLVLGICLA, AIAPILVFVLVMASIANKEVG, ILVMYVLGTFVAAVTAVILSY, AITNGNFIGILAWSIGLGIAL, AVSFVVKVVIAFAPIGVFGLV, LLAVLLGAMAIVAFILNPLLV, IAIPLGANINMAGAAITITVL, and IVASICACGASGVAGGSLLLI.

Belongs to the dicarboxylate/amino acid:cation symporter (DAACS) (TC 2.A.23) family.

The protein resides in the cell inner membrane. It catalyses the reaction L-serine(in) + Na(+)(in) = L-serine(out) + Na(+)(out). It carries out the reaction L-threonine(in) + Na(+)(in) = L-threonine(out) + Na(+)(out). Involved in the import of serine and threonine into the cell, with the concomitant import of sodium (symport system). This is Serine/threonine transporter SstT from Glaesserella parasuis serovar 5 (strain SH0165) (Haemophilus parasuis).